A 126-amino-acid chain; its full sequence is Aspartate 1-decarboxylase (126 aa).

The active-site Schiff-base intermediate with substrate; via pyruvic acid is Ser-25. Ser-25 is modified (pyruvic acid (Ser)). Residue Thr-57 coordinates substrate. Tyr-58 serves as the catalytic Proton donor. 73–75 (GAA) contributes to the substrate binding site.

Belongs to the PanD family. As to quaternary structure, heterooctamer of four alpha and four beta subunits. Pyruvate is required as a cofactor. Post-translationally, is synthesized initially as an inactive proenzyme, which is activated by self-cleavage at a specific serine bond to produce a beta-subunit with a hydroxyl group at its C-terminus and an alpha-subunit with a pyruvoyl group at its N-terminus.

It is found in the cytoplasm. The enzyme catalyses L-aspartate + H(+) = beta-alanine + CO2. The protein operates within cofactor biosynthesis; (R)-pantothenate biosynthesis; beta-alanine from L-aspartate: step 1/1. In terms of biological role, catalyzes the pyruvoyl-dependent decarboxylation of aspartate to produce beta-alanine. This Alkalilimnicola ehrlichii (strain ATCC BAA-1101 / DSM 17681 / MLHE-1) protein is Aspartate 1-decarboxylase.